The following is a 174-amino-acid chain: uncharacterized protein (174 aa).

The interval 138 to 174 (VNLTSKSSGRSDEEGTTRRAPVLKTRADFVSRKDKHR) is disordered. The span at 162–174 (TRADFVSRKDKHR) shows a compositional bias: basic and acidic residues.

This is an uncharacterized protein from Bos taurus (Bovine).